Here is a 405-residue protein sequence, read N- to C-terminus: Glucose-1-phosphate adenylyltransferase 1 (405 aa).

Alpha-D-glucose 1-phosphate contacts are provided by residues Y96, G161, 176 to 177 (EK), and S194.

This sequence belongs to the bacterial/plant glucose-1-phosphate adenylyltransferase family. As to quaternary structure, homotetramer.

It catalyses the reaction alpha-D-glucose 1-phosphate + ATP + H(+) = ADP-alpha-D-glucose + diphosphate. The protein operates within glycan biosynthesis; glycogen biosynthesis. In terms of biological role, involved in the biosynthesis of ADP-glucose, a building block required for the elongation reactions to produce glycogen. Catalyzes the reaction between ATP and alpha-D-glucose 1-phosphate (G1P) to produce pyrophosphate and ADP-Glc. The chain is Glucose-1-phosphate adenylyltransferase 1 from Vibrio vulnificus (strain YJ016).